Here is a 341-residue protein sequence, read N- to C-terminus: L-threonine 3-dehydrogenase (341 aa).

Cys-38 contributes to the Zn(2+) binding site. Active-site charge relay system residues include Thr-40 and His-43. The Zn(2+) site is built by His-63, Glu-64, Cys-93, Cys-96, Cys-99, and Cys-107. NAD(+)-binding positions include Ile-175, Asp-195, Arg-200, 262–264 (LGI), and 286–287 (IY).

The protein belongs to the zinc-containing alcohol dehydrogenase family. As to quaternary structure, homotetramer. It depends on Zn(2+) as a cofactor.

The protein resides in the cytoplasm. It carries out the reaction L-threonine + NAD(+) = (2S)-2-amino-3-oxobutanoate + NADH + H(+). It functions in the pathway amino-acid degradation; L-threonine degradation via oxydo-reductase pathway; glycine from L-threonine: step 1/2. Its function is as follows. Catalyzes the NAD(+)-dependent oxidation of L-threonine to 2-amino-3-ketobutyrate. This Shewanella putrefaciens (strain CN-32 / ATCC BAA-453) protein is L-threonine 3-dehydrogenase.